Here is a 519-residue protein sequence, read N- to C-terminus: Sterile alpha motif domain-containing protein 1 (519 aa).

Residues 1-11 (MAGPPALPPPE) show a composition bias toward pro residues. Disordered regions lie at residues 1–30 (MAGP…ASPH) and 87–232 (YKGS…PVSL). A compositionally biased stretch (low complexity) spans 12–29 (TAAAATTAAAASSSAASP). Residues 23–99 (SSSAASPHYQ…SISYRNAARV (77 aa)) form the SAMD1-like winged helix (WH) domain. Phosphothreonine is present on T107. Positions 108 to 133 (PPAPPRVPRGGPAAPPPTPAPPPAPV) are enriched in pro residues. Over residues 134–147 (AAPTRAPRAAAATA) the composition is skewed to low complexity. Residue S150 is modified to Phosphoserine. Residues 157-166 (GPRAQRAAPL) show a composition bias toward low complexity. Residues 167 to 217 (AAPPPAPAAPPAAAPPAGPRRAPPPAVAAREPPAPPQQQQPPPPQPQPPPE) are compositionally biased toward pro residues. Low complexity predominate over residues 218–230 (GGAARAGGPARPV). The residue at position 242 (S242) is a Phosphoserine. Residues 261–271 (EAARGRLERTR) show a composition bias toward basic and acidic residues. Disordered regions lie at residues 261-381 (EAAR…PGSC) and 417-439 (PALP…KPTD). Residues 308–325 (KEEEDEDEDEEEEEEDNV) are compositionally biased toward acidic residues. Residues 443 to 511 (WTVMDVVEYF…KVLQQGHFED (69 aa)) form the SAM domain.

Homopolymerize into a closed pentameric ring. Interacts (via SAM domain) with L3MBTL3 (via SAM domain); the interaction mediates L3MBTL3 binding to chromatin. Interacts (via WH domain) with KDM1A; the interaction modulates KDM1A function. In terms of tissue distribution, expressed to similar levels in different organs. Expressed at higher levels in bone marrow, osteoclasts and spleen. Expressed in vascular smooth muscle cells.

The protein resides in the nucleus. It is found in the chromosome. Its subcellular location is the secreted. Unmethylated CpG islands (CGIs)-binding protein which localizes to H3K4me3-decorated CGIs, where it acts as a transcriptional repressor. Tethers L3MBTL3 to chromatin and interacts with the KDM1A histone demethylase complex to modulate H3K4me2 and H3K4me3 levels at CGIs. Plays a role in atherogenesis by binding with LDL on cell surface and promoting LDL oxidation which leads to the formation of foam cell. The chain is Sterile alpha motif domain-containing protein 1 from Mus musculus (Mouse).